Here is a 623-residue protein sequence, read N- to C-terminus: Leucine aminopeptidase 2 (623 aa).

A peptide is bound by residues 136–138 (QCQ) and 273–278 (PYGGME). Histidine 302 contacts Zn(2+). Residue glutamate 303 is the Proton acceptor of the active site. Zn(2+) contacts are provided by histidine 306 and glutamate 325. Tyrosine 390 serves as the catalytic Proton donor.

It belongs to the peptidase M1 family. Zn(2+) is required as a cofactor.

The protein localises to the cytoplasm. The protein resides in the nucleus. The enzyme catalyses an epoxide + H2O = an ethanediol. Its function is as follows. Aminopeptidase that preferentially cleaves di- and tripeptides. Also has low epoxide hydrolase activity (in vitro). Can hydrolyze the epoxide leukotriene LTA(4) but it forms preferentially 5,6-dihydroxy-7,9,11,14-eicosatetraenoic acid rather than the cytokine leukotriene B(4) as the product compared to the homologous mammalian enzyme (in vitro). In Phaeosphaeria nodorum (strain SN15 / ATCC MYA-4574 / FGSC 10173) (Glume blotch fungus), this protein is Leucine aminopeptidase 2.